Here is an 841-residue protein sequence, read N- to C-terminus: Protein translocase subunit SecA (841 aa).

Residues Q85, 103–107 (GEGKT), and D492 contribute to the ATP site. A disordered region spans residues 786–812 (REEVVQGQTTAHQPQDGDEAKQAKKAP). Zn(2+) is bound by residues C825, C827, C836, and C837.

The protein belongs to the SecA family. As to quaternary structure, monomer and homodimer. Part of the essential Sec protein translocation apparatus which comprises SecA, SecYEG and auxiliary proteins SecDF. Other proteins may also be involved. Requires Zn(2+) as cofactor.

It localises to the cell membrane. The protein resides in the cytoplasm. The enzyme catalyses ATP + H2O + cellular proteinSide 1 = ADP + phosphate + cellular proteinSide 2.. Its function is as follows. Part of the Sec protein translocase complex. Interacts with the SecYEG preprotein conducting channel. Has a central role in coupling the hydrolysis of ATP to the transfer of proteins into and across the cell membrane, serving as an ATP-driven molecular motor driving the stepwise translocation of polypeptide chains across the membrane. This chain is Protein translocase subunit SecA, found in Bacillus velezensis (strain DSM 23117 / BGSC 10A6 / LMG 26770 / FZB42) (Bacillus amyloliquefaciens subsp. plantarum).